Consider the following 105-residue polypeptide: Putative neurotoxin 10 (105 aa).

The N-terminal stretch at 1–21 (MTVSCSKVLLSLCLFLMLLKA) is a signal peptide.

Belongs to the scolopendra neurotoxin 10 family. In terms of processing, contains 3 disulfide bonds. As to expression, expressed by the venom gland.

The protein resides in the secreted. The polypeptide is Putative neurotoxin 10 (Scolopendra subspinipes (Vietnamese centipede)).